Consider the following 95-residue polypeptide: Large ribosomal subunit protein uL23 (95 aa).

Belongs to the universal ribosomal protein uL23 family. Part of the 50S ribosomal subunit. Contacts protein L29, and trigger factor when it is bound to the ribosome.

One of the early assembly proteins it binds 23S rRNA. One of the proteins that surrounds the polypeptide exit tunnel on the outside of the ribosome. Forms the main docking site for trigger factor binding to the ribosome. This Bacillus pumilus (strain SAFR-032) protein is Large ribosomal subunit protein uL23.